Reading from the N-terminus, the 89-residue chain is Small ribosomal subunit protein uS15 (89 aa).

This sequence belongs to the universal ribosomal protein uS15 family. In terms of assembly, part of the 30S ribosomal subunit. Forms a bridge to the 50S subunit in the 70S ribosome, contacting the 23S rRNA.

Functionally, one of the primary rRNA binding proteins, it binds directly to 16S rRNA where it helps nucleate assembly of the platform of the 30S subunit by binding and bridging several RNA helices of the 16S rRNA. In terms of biological role, forms an intersubunit bridge (bridge B4) with the 23S rRNA of the 50S subunit in the ribosome. The polypeptide is Small ribosomal subunit protein uS15 (Mycobacterium marinum (strain ATCC BAA-535 / M)).